A 185-amino-acid chain; its full sequence is Ribosome-recycling factor (185 aa).

This sequence belongs to the RRF family.

The protein resides in the cytoplasm. Responsible for the release of ribosomes from messenger RNA at the termination of protein biosynthesis. May increase the efficiency of translation by recycling ribosomes from one round of translation to another. The chain is Ribosome-recycling factor from Lactococcus lactis subsp. cremoris (strain SK11).